The sequence spans 734 residues: 1,4-alpha-glucan branching enzyme GlgB (734 aa).

Residue aspartate 417 is the Nucleophile of the active site. Catalysis depends on glutamate 470, which acts as the Proton donor.

The protein belongs to the glycosyl hydrolase 13 family. GlgB subfamily. In terms of assembly, monomer.

It carries out the reaction Transfers a segment of a (1-&gt;4)-alpha-D-glucan chain to a primary hydroxy group in a similar glucan chain.. It functions in the pathway glycan biosynthesis; glycogen biosynthesis. Functionally, catalyzes the formation of the alpha-1,6-glucosidic linkages in glycogen by scission of a 1,4-alpha-linked oligosaccharide from growing alpha-1,4-glucan chains and the subsequent attachment of the oligosaccharide to the alpha-1,6 position. In Rhizobium radiobacter (Agrobacterium tumefaciens), this protein is 1,4-alpha-glucan branching enzyme GlgB (glgB).